The following is a 188-amino-acid chain: Ribosome-recycling factor (188 aa).

This sequence belongs to the RRF family.

It is found in the cytoplasm. Responsible for the release of ribosomes from messenger RNA at the termination of protein biosynthesis. May increase the efficiency of translation by recycling ribosomes from one round of translation to another. This is Ribosome-recycling factor from Cereibacter sphaeroides (strain ATCC 17025 / ATH 2.4.3) (Rhodobacter sphaeroides).